The following is a 323-amino-acid chain: DNA-directed RNA polymerase subunit alpha 1 (323 aa).

The segment at 1 to 228 (MSNNNSKLEF…EQISVFVSLR (228 aa)) is alpha N-terminal domain (alpha-NTD). An alpha C-terminal domain (alpha-CTD) region spans residues 244 to 323 (IDPILLKPID…DNFRELVEGK (80 aa)).

It belongs to the RNA polymerase alpha chain family. In terms of assembly, homodimer. The RNAP catalytic core consists of 2 alpha, 1 beta, 1 beta' and 1 omega subunit. When a sigma factor is associated with the core the holoenzyme is formed, which can initiate transcription.

It catalyses the reaction RNA(n) + a ribonucleoside 5'-triphosphate = RNA(n+1) + diphosphate. DNA-dependent RNA polymerase catalyzes the transcription of DNA into RNA using the four ribonucleoside triphosphates as substrates. In Francisella tularensis subsp. tularensis (strain FSC 198), this protein is DNA-directed RNA polymerase subunit alpha 1.